A 608-amino-acid chain; its full sequence is Granule-bound starch synthase 1, chloroplastic/amyloplastic (608 aa).

The N-terminal 78 residues, 1 to 78 (MATVIAAHFV…NGRPAAKIIC (78 aa)), are a transit peptide targeting the chloroplast. Residue Lys96 coordinates ADP-alpha-D-glucose. The segment at 587-608 (GSEPGTEGEEIAPLAKENVPTP) is disordered.

Belongs to the glycosyltransferase 1 family. Bacterial/plant glycogen synthase subfamily. As to expression, synthesized in a number of different organs, but most abundantly in tubers.

Its subcellular location is the plastid. It is found in the chloroplast. The protein localises to the amyloplast. The catalysed reaction is an NDP-alpha-D-glucose + [(1-&gt;4)-alpha-D-glucosyl](n) = [(1-&gt;4)-alpha-D-glucosyl](n+1) + a ribonucleoside 5'-diphosphate + H(+). It functions in the pathway glycan biosynthesis; starch biosynthesis. Functionally, responsible for the synthesis of amylose in reserve starch. This is Granule-bound starch synthase 1, chloroplastic/amyloplastic (WAXY) from Manihot esculenta (Cassava).